Here is a 58-residue protein sequence, read N- to C-terminus: WFPCEYECRVDWGSNRRQLRTCTKECEQERASCMTGSSDPACSTNKANNQLHVQFKTL.

Component of the organic matrix of calcified shell layers.

The polypeptide is Gigasin-4 (Magallana gigas (Pacific oyster)).